We begin with the raw amino-acid sequence, 177 residues long: Ribonuclease alpha-sarcin (177 aa).

Positions 1-27 (MVAIKNLVLVALTAVTALAVPSPLEAR) are cleaved as a signal peptide. Intrachain disulfides connect C33–C175 and C103–C159. H77 is an active-site residue. Positions 86–119 (DGKLPKGRTPIKFGKSDCDRPPKHSKDGNGKTDH) are disordered. Residues 99–119 (GKSDCDRPPKHSKDGNGKTDH) are compositionally biased toward basic and acidic residues. The active-site Proton acceptor is E123. H164 (proton donor) is an active-site residue.

The protein belongs to the ribonuclease U2 family.

The protein localises to the secreted. The catalysed reaction is a 28S rRNA containing guanosine-adenosine pair + H2O = an [RNA fragment]-3'-adenosine-3'-phosphate + a 5'-a hydroxy-guanosine-3'-[RNA fragment].. Alpha-sarcin is specific for purines in both single- and double-stranded RNA. Its toxic action on eukaryotic cells is the result of cleavage of a single phosphodiester bond in the 60S subunit of ribosomes. Inhibits both the EFl (elongation factor 1)-dependent binding of aminoacyl-tRNA and the GTP-dependent binding of EF2 (elongation factor 2) to ribosomes. The chain is Ribonuclease alpha-sarcin (sar) from Aspergillus giganteus.